An 88-amino-acid polypeptide reads, in one-letter code: ATP synthase F(0) complex subunit f, mitochondrial (88 aa).

Alanine 2 carries the post-translational modification N-acetylalanine. The residue at position 3 (serine 3) is a Phosphoserine. Lysine 16 is subject to N6-acetyllysine. Residues 62–79 form a helical membrane-spanning segment; sequence MVLAAYVVFSYCISYKEL.

Belongs to the ATPase F chain family. Component of the ATP synthase complex composed at least of ATP5F1A/subunit alpha, ATP5F1B/subunit beta, ATP5MC1/subunit c (homooctomer), MT-ATP6/subunit a, MT-ATP8/subunit 8, ATP5ME/subunit e, ATP5MF/subunit f, ATP5MG/subunit g, ATP5MK/subunit k, ATP5MJ/subunit j, ATP5F1C/subunit gamma, ATP5F1D/subunit delta, ATP5F1E/subunit epsilon, ATP5PF/subunit F6, ATP5PB/subunit b, ATP5PD/subunit d, ATP5PO/subunit OSCP. ATP synthase complex consists of a soluble F(1) head domain (subunits alpha(3) and beta(3)) - the catalytic core - and a membrane F(0) domain - the membrane proton channel (subunits c, a, 8, e, f, g, k and j). These two domains are linked by a central stalk (subunits gamma, delta, and epsilon) rotating inside the F1 region and a stationary peripheral stalk (subunits F6, b, d, and OSCP).

Its subcellular location is the mitochondrion. It is found in the mitochondrion inner membrane. Subunit f, of the mitochondrial membrane ATP synthase complex (F(1)F(0) ATP synthase or Complex V) that produces ATP from ADP in the presence of a proton gradient across the membrane which is generated by electron transport complexes of the respiratory chain. ATP synthase complex consist of a soluble F(1) head domain - the catalytic core - and a membrane F(1) domain - the membrane proton channel. These two domains are linked by a central stalk rotating inside the F(1) region and a stationary peripheral stalk. During catalysis, ATP synthesis in the catalytic domain of F(1) is coupled via a rotary mechanism of the central stalk subunits to proton translocation. In vivo, can only synthesize ATP although its ATP hydrolase activity can be activated artificially in vitro. Part of the complex F(0) domain. The protein is ATP synthase F(0) complex subunit f, mitochondrial of Rattus norvegicus (Rat).